The sequence spans 350 residues: Probable aldo-keto reductase 1 (350 aa).

Y67 (proton donor) is an active-site residue. A substrate-binding site is contributed by H135. An NADP(+)-binding site is contributed by 214 to 224; it reads SPLGKGFFSSG.

Belongs to the aldo/keto reductase family.

The polypeptide is Probable aldo-keto reductase 1 (Oryza sativa subsp. indica (Rice)).